Consider the following 373-residue polypeptide: Probable tRNA sulfurtransferase (373 aa).

A THUMP domain is found at 54 to 158; sequence NKNIEELSKV…NDVAYFYYKI (105 aa). ATP is bound by residues 176–177, 201–202, Lys256, Gly278, and Gln287; these read LF and NF.

The protein belongs to the ThiI family.

The protein resides in the cytoplasm. The catalysed reaction is [ThiI sulfur-carrier protein]-S-sulfanyl-L-cysteine + a uridine in tRNA + 2 reduced [2Fe-2S]-[ferredoxin] + ATP + H(+) = [ThiI sulfur-carrier protein]-L-cysteine + a 4-thiouridine in tRNA + 2 oxidized [2Fe-2S]-[ferredoxin] + AMP + diphosphate. It carries out the reaction [ThiS sulfur-carrier protein]-C-terminal Gly-Gly-AMP + S-sulfanyl-L-cysteinyl-[cysteine desulfurase] + AH2 = [ThiS sulfur-carrier protein]-C-terminal-Gly-aminoethanethioate + L-cysteinyl-[cysteine desulfurase] + A + AMP + 2 H(+). It participates in cofactor biosynthesis; thiamine diphosphate biosynthesis. Catalyzes the ATP-dependent transfer of a sulfur to tRNA to produce 4-thiouridine in position 8 of tRNAs, which functions as a near-UV photosensor. Also catalyzes the transfer of sulfur to the sulfur carrier protein ThiS, forming ThiS-thiocarboxylate. This is a step in the synthesis of thiazole, in the thiamine biosynthesis pathway. The sulfur is donated as persulfide by IscS. This chain is Probable tRNA sulfurtransferase, found in Saccharolobus islandicus (strain Y.N.15.51 / Yellowstone #2) (Sulfolobus islandicus).